A 556-amino-acid chain; its full sequence is Genetic interactor of prohibitins 3, mitochondrial (556 aa).

The N-terminal 21 residues, 1–21 (MLNLCHALRGVRQFSCSVIVK), are a transit peptide targeting the mitochondrion. The CP-type G domain occupies 113 to 305 (ESTLNDILNY…LFDLPGYSTS (193 aa)).

This sequence belongs to the TRAFAC class YlqF/YawG GTPase family. GEP3 subfamily.

The protein resides in the mitochondrion. Its function is as follows. Interacts genetically with prohibitins and thus may be involved in the mitochondrial lipid metabolism. This chain is Genetic interactor of prohibitins 3, mitochondrial (GEP3), found in Saccharomyces cerevisiae (strain ATCC 204508 / S288c) (Baker's yeast).